Consider the following 221-residue polypeptide: Ribosome maturation factor RimM (221 aa).

The interval 1–23 is disordered; sequence MTERKQGAAAPRPLNRPQGESPK. Positions 144–221 constitute a PRC barrel domain; that stretch reads ENEFYWVDLI…RIVVDWGLDY (78 aa).

The protein belongs to the RimM family. Binds ribosomal protein uS19.

The protein localises to the cytoplasm. Functionally, an accessory protein needed during the final step in the assembly of 30S ribosomal subunit, possibly for assembly of the head region. Essential for efficient processing of 16S rRNA. May be needed both before and after RbfA during the maturation of 16S rRNA. It has affinity for free ribosomal 30S subunits but not for 70S ribosomes. The chain is Ribosome maturation factor RimM from Cupriavidus pinatubonensis (strain JMP 134 / LMG 1197) (Cupriavidus necator (strain JMP 134)).